Reading from the N-terminus, the 472-residue chain is MNYLPIFIDIKQKPCLVVGGGDIAYRKINFLLKAHGQVTCIAKSSCKNVVKLASDNKIIYFEKSFEASDIKEQVLIVSATDNTSLNKQVSELSNQNNIPVNVVDSPDLCTFIMPSIVDRSPIVIAISSAGKAPVLARLIRAKLESTLPHAYGKLAELAGNFRDKVKEKFSNIEDRRYFWEKTFSGIIAEKVFSGKIQEAKADLQVQLDGSTKTQVGEVYLVGGGPGDPDLLTFKALRLMQQADVVLYDRLVSNGVMGLVRRDAQLIYVGKERDNHVVPQGDINQLLVNLAKQGRRVCRLKGGDPFIFGRGGEEIETLAENGISFQVVPGITAASGCSTYSGIPLTHRDYSQSCRFVTGHLKDGSMNLPWHELSVEQQTIVFYMALNGARHLSEQLITHGMSPDMPVALVEKGTTPEQKVYTTTLKKLPDLVKNEIIHAPTLIIIGEVVTLREKLNWFDAKLASSKKSYLFGG.

The tract at residues Met-1 to Leu-203 is precorrin-2 dehydrogenase /sirohydrochlorin ferrochelatase. Residues Asp-22–Ile-23 and Lys-43–Ser-44 each bind NAD(+). Ser-128 is subject to Phosphoserine. Residues Gly-216–Gly-472 form a uroporphyrinogen-III C-methyltransferase region. Pro-225 is an S-adenosyl-L-methionine binding site. Asp-248 (proton acceptor) is an active-site residue. The Proton donor role is filled by Lys-270. Residues Gly-301–Asp-303, Ile-306, Thr-331–Ala-332, Met-383, and Gly-412 contribute to the S-adenosyl-L-methionine site.

This sequence in the N-terminal section; belongs to the precorrin-2 dehydrogenase / sirohydrochlorin ferrochelatase family. In the C-terminal section; belongs to the precorrin methyltransferase family.

It catalyses the reaction uroporphyrinogen III + 2 S-adenosyl-L-methionine = precorrin-2 + 2 S-adenosyl-L-homocysteine + H(+). The catalysed reaction is precorrin-2 + NAD(+) = sirohydrochlorin + NADH + 2 H(+). The enzyme catalyses siroheme + 2 H(+) = sirohydrochlorin + Fe(2+). It functions in the pathway cofactor biosynthesis; adenosylcobalamin biosynthesis; precorrin-2 from uroporphyrinogen III: step 1/1. Its pathway is cofactor biosynthesis; adenosylcobalamin biosynthesis; sirohydrochlorin from precorrin-2: step 1/1. It participates in porphyrin-containing compound metabolism; siroheme biosynthesis; precorrin-2 from uroporphyrinogen III: step 1/1. The protein operates within porphyrin-containing compound metabolism; siroheme biosynthesis; siroheme from sirohydrochlorin: step 1/1. It functions in the pathway porphyrin-containing compound metabolism; siroheme biosynthesis; sirohydrochlorin from precorrin-2: step 1/1. Its function is as follows. Multifunctional enzyme that catalyzes the SAM-dependent methylations of uroporphyrinogen III at position C-2 and C-7 to form precorrin-2 via precorrin-1. Then it catalyzes the NAD-dependent ring dehydrogenation of precorrin-2 to yield sirohydrochlorin. Finally, it catalyzes the ferrochelation of sirohydrochlorin to yield siroheme. The polypeptide is Siroheme synthase (Ruthia magnifica subsp. Calyptogena magnifica).